A 555-amino-acid polypeptide reads, in one-letter code: Connector enhancer of kinase suppressor of ras 3 (555 aa).

An SAM domain is found at 7-72 (WSPKQVVDWT…LEAVDLLCAL (66 aa)). In terms of domain architecture, CRIC spans 80–174 (NMKNLVLKLR…TAVQKDCLVA (95 aa)). The 83-residue stretch at 211–293 (EVHLPNVRPG…GVVLLLKKRP (83 aa)) folds into the PDZ domain. Disordered regions lie at residues 308–333 (RWKP…MDAS), 348–391 (PPPA…LDQE), and 518–538 (PFQE…ASSG). Low complexity predominate over residues 311–329 (PPLVQTSPPPTTTQSPEST). The 222-residue stretch at 325-546 (SPESTMDASL…SGEPSLLVSW (222 aa)) folds into the DUF1170 domain. A phosphoserine mark is found at serine 381 and serine 383.

It belongs to the CNKSR family. Interacts with epithelial sodium channel ENaC. Interacts directly with SCNN1A (ENaC subunit alpha) and SCNN1B (ENaC subunit beta) C-terminal tails. Interacts with ENaC regulatory proteins NEDD4L, RAF1 and SGK1.

It is found in the cytoplasm. The protein localises to the apical cell membrane. Involved in transepithelial sodium transport. Regulates aldosterone-induced and epithelial sodium channel (ENaC)-mediated sodium transport through regulation of ENaC cell surface expression. Acts as a scaffold protein coordinating the assembly of an ENaC-regulatory complex (ERC). The protein is Connector enhancer of kinase suppressor of ras 3 (Cnksr3) of Rattus norvegicus (Rat).